The sequence spans 700 residues: Putative ankyrin repeat protein FPV018 (700 aa).

ANK repeat units lie at residues 29 to 59, 63 to 92, 126 to 155, 204 to 233, 236 to 265, 270 to 299, 301 to 332, 395 to 424, 428 to 457, 461 to 490, and 494 to 523; these read DRLL…VINM, NRLL…VING, RIRR…DLKM, MRRI…LADT, ALED…DINS, NSHT…DPDI, DIYS…RIRC, CNMY…DVNV, YGKT…NVNE, YGIT…DVNQ, and DKNT…DMCF.

The protein is Putative ankyrin repeat protein FPV018 of Fowlpox virus (strain NVSL) (FPV).